The sequence spans 426 residues: tRNA(Ile)-lysidine synthase (426 aa).

19-24 (SGGLDS) is a binding site for ATP.

It belongs to the tRNA(Ile)-lysidine synthase family.

Its subcellular location is the cytoplasm. It carries out the reaction cytidine(34) in tRNA(Ile2) + L-lysine + ATP = lysidine(34) in tRNA(Ile2) + AMP + diphosphate + H(+). Functionally, ligates lysine onto the cytidine present at position 34 of the AUA codon-specific tRNA(Ile) that contains the anticodon CAU, in an ATP-dependent manner. Cytidine is converted to lysidine, thus changing the amino acid specificity of the tRNA from methionine to isoleucine. This Neisseria meningitidis serogroup A / serotype 4A (strain DSM 15465 / Z2491) protein is tRNA(Ile)-lysidine synthase.